The primary structure comprises 171 residues: 3-hydroxydecanoyl-[acyl-carrier-protein] dehydratase (171 aa).

Histidine 71 is an active-site residue.

This sequence belongs to the thioester dehydratase family. FabA subfamily. As to quaternary structure, homodimer.

It is found in the cytoplasm. The enzyme catalyses a (3R)-hydroxyacyl-[ACP] = a (2E)-enoyl-[ACP] + H2O. The catalysed reaction is (3R)-hydroxydecanoyl-[ACP] = (2E)-decenoyl-[ACP] + H2O. It catalyses the reaction (2E)-decenoyl-[ACP] = (3Z)-decenoyl-[ACP]. Its pathway is lipid metabolism; fatty acid biosynthesis. In terms of biological role, necessary for the introduction of cis unsaturation into fatty acids. Catalyzes the dehydration of (3R)-3-hydroxydecanoyl-ACP to E-(2)-decenoyl-ACP and then its isomerization to Z-(3)-decenoyl-ACP. Can catalyze the dehydratase reaction for beta-hydroxyacyl-ACPs with saturated chain lengths up to 16:0, being most active on intermediate chain length. This chain is 3-hydroxydecanoyl-[acyl-carrier-protein] dehydratase, found in Rhizobium rhizogenes (strain K84 / ATCC BAA-868) (Agrobacterium radiobacter).